The sequence spans 55 residues: Large ribosomal subunit protein bL33 (55 aa).

Belongs to the bacterial ribosomal protein bL33 family.

This is Large ribosomal subunit protein bL33 from Bartonella bacilliformis (strain ATCC 35685 / KC583 / Herrer 020/F12,63).